Reading from the N-terminus, the 384-residue chain is 8-amino-7-oxononanoate synthase (384 aa).

Arg21 lines the substrate pocket. A pyridoxal 5'-phosphate-binding site is contributed by 108 to 109; that stretch reads GF. His133 is a substrate binding site. Positions 179, 207, and 233 each coordinate pyridoxal 5'-phosphate. Position 236 is an N6-(pyridoxal phosphate)lysine (Lys236). Thr352 serves as a coordination point for substrate.

The protein belongs to the class-II pyridoxal-phosphate-dependent aminotransferase family. BioF subfamily. In terms of assembly, homodimer. Pyridoxal 5'-phosphate is required as a cofactor.

It catalyses the reaction 6-carboxyhexanoyl-[ACP] + L-alanine + H(+) = (8S)-8-amino-7-oxononanoate + holo-[ACP] + CO2. It functions in the pathway cofactor biosynthesis; biotin biosynthesis. Functionally, catalyzes the decarboxylative condensation of pimeloyl-[acyl-carrier protein] and L-alanine to produce 8-amino-7-oxononanoate (AON), [acyl-carrier protein], and carbon dioxide. This is 8-amino-7-oxononanoate synthase from Escherichia coli O157:H7.